A 62-amino-acid chain; its full sequence is Kininogen-1 (62 aa).

The N-terminal stretch at 1-22 is a signal peptide; sequence MDILKKSLFLVLFLGLVSFSIC. Residues 24 to 62 are disordered; that stretch reads EEKRDTEEEENDDEIEEESEEKKREAPERPPGFTPFRIY. Positions 30 to 42 are enriched in acidic residues; it reads EEEENDDEIEEES. A 4-hydroxyproline; partial modification is found at Pro54. Tyr62 bears the Sulfotyrosine mark.

It belongs to the frog skin active peptide (FSAP) family. Bradykinin-related peptide subfamily. In terms of tissue distribution, expressed by the skin glands.

It is found in the secreted. In terms of biological role, inhibits ACE with a Ki of 1.6 uM, and targets B2 bradykinin receptor (BDKRB2). Provokes contraction of smooth muscle preparation (ileum). In vivo, induces an early hyperalgesic effects in living rats after intraplantar injection. In Phyllomedusa sauvagei (Sauvage's leaf frog), this protein is Kininogen-1.